We begin with the raw amino-acid sequence, 327 residues long: Serpentine receptor class alpha-12 (327 aa).

Topologically, residues 1–18 are extracellular; sequence MGCASEIQAEIFTSFGQL. Residues 19-39 traverse the membrane as a helical segment; the sequence is FYASFQTILFLATIIGSLLAI. Residues 40–53 are Cytoplasmic-facing; that stretch reads FELCKKTTVPDSTR. Residues 54–74 form a helical membrane-spanning segment; it reads VLLIGSLFFANAHEFAYFTAP. Over 75–98 the chain is Extracellular; sequence LKVFQLNIFNTNTSCYPLISTRDC. A helical membrane pass occupies residues 99–119; that stretch reads IPTTTVLAMGISGNMLIQSAL. Residues 120 to 138 are Cytoplasmic-facing; sequence SIDRLLATIFPFSYSRMRA. Residues 139 to 159 traverse the membrane as a helical segment; it reads LPGFVLLIMVLIPAMFTYSWI. At 160 to 185 the chain is on the extracellular side; the sequence is RLDIVLDDYQMFCSQWSANISTRANT. Residues 186–206 traverse the membrane as a helical segment; that stretch reads FLEICSYLTVAHIIINCLIIL. Residues 207–234 lie on the Cytoplasmic side of the membrane; it reads RNRAIEKRCRFDVTQRYLTSENLKTTQA. The helical transmembrane segment at 235 to 255 threads the bilayer; it reads ICYLSIAQFLAMFMYSGGVLL. At 256-270 the chain is on the extracellular side; the sequence is MRKNRENIPTLIYFN. Residues 271–291 form a helical membrane-spanning segment; the sequence is VIVWVYAPPYACVSLAPLILF. Residues 292-327 lie on the Cytoplasmic side of the membrane; it reads SLWNLKKQRHIQIKSVQSAQKETQDDYIRKLQKSWK.

The protein belongs to the nematode receptor-like protein sra family. As to expression, expressed in neurons RIF/RIG and PVT.

The protein localises to the membrane. In Caenorhabditis elegans, this protein is Serpentine receptor class alpha-12 (sra-12).